The primary structure comprises 170 residues: Adenine phosphoribosyltransferase (170 aa).

Belongs to the purine/pyrimidine phosphoribosyltransferase family. Homodimer.

It is found in the cytoplasm. It carries out the reaction AMP + diphosphate = 5-phospho-alpha-D-ribose 1-diphosphate + adenine. It participates in purine metabolism; AMP biosynthesis via salvage pathway; AMP from adenine: step 1/1. Its function is as follows. Catalyzes a salvage reaction resulting in the formation of AMP, that is energically less costly than de novo synthesis. This Lactococcus lactis subsp. cremoris (strain SK11) protein is Adenine phosphoribosyltransferase.